Consider the following 280-residue polypeptide: Elongation factor Ts (280 aa).

The tract at residues 79–82 (TDFV) is involved in Mg(2+) ion dislocation from EF-Tu.

This sequence belongs to the EF-Ts family.

The protein resides in the cytoplasm. Associates with the EF-Tu.GDP complex and induces the exchange of GDP to GTP. It remains bound to the aminoacyl-tRNA.EF-Tu.GTP complex up to the GTP hydrolysis stage on the ribosome. This is Elongation factor Ts from Vibrio vulnificus (strain CMCP6).